The chain runs to 117 residues: Immunoglobulin heavy variable 4-28 (117 aa).

A signal peptide spans 1–19 (MKHLWFFLLLVAAPRWVLS). A framework-1 region spans residues 20-44 (QVQLQESGPGLVKPSDTLSLTCAVS). The region spanning 20-117 (QVQLQESGPG…VDTAVYYCAR (98 aa)) is the Ig-like domain. A disulfide bridge links cysteine 41 with cysteine 115. Residues 45-53 (GYSISSSNW) form a complementarity-determining-1 region. The framework-2 stretch occupies residues 54–70 (WGWIRQPPGKGLEWIGY). Positions 71 to 77 (IYYSGST) are complementarity-determining-2. A framework-3 region spans residues 78 to 115 (YYNPSLKSRVTMSVDTSKNQFSLKLSSVTAVDTAVYYC). A complementarity-determining-3 region spans residues 116–117 (AR).

In terms of assembly, immunoglobulins are composed of two identical heavy chains and two identical light chains; disulfide-linked.

It is found in the secreted. The protein localises to the cell membrane. Its function is as follows. V region of the variable domain of immunoglobulin heavy chains that participates in the antigen recognition. Immunoglobulins, also known as antibodies, are membrane-bound or secreted glycoproteins produced by B lymphocytes. In the recognition phase of humoral immunity, the membrane-bound immunoglobulins serve as receptors which, upon binding of a specific antigen, trigger the clonal expansion and differentiation of B lymphocytes into immunoglobulins-secreting plasma cells. Secreted immunoglobulins mediate the effector phase of humoral immunity, which results in the elimination of bound antigens. The antigen binding site is formed by the variable domain of one heavy chain, together with that of its associated light chain. Thus, each immunoglobulin has two antigen binding sites with remarkable affinity for a particular antigen. The variable domains are assembled by a process called V-(D)-J rearrangement and can then be subjected to somatic hypermutations which, after exposure to antigen and selection, allow affinity maturation for a particular antigen. This is Immunoglobulin heavy variable 4-28 from Homo sapiens (Human).